The primary structure comprises 415 residues: Putative competence-damage inducible protein (415 aa).

It belongs to the CinA family.

In Listeria welshimeri serovar 6b (strain ATCC 35897 / DSM 20650 / CCUG 15529 / CIP 8149 / NCTC 11857 / SLCC 5334 / V8), this protein is Putative competence-damage inducible protein.